The following is a 195-amino-acid chain: Pyridoxal 5'-phosphate synthase subunit PdxT (195 aa).

Residue 46 to 48 (GES) participates in L-glutamine binding. C78 serves as the catalytic Nucleophile. Residues R105 and 133–134 (IR) contribute to the L-glutamine site. Residues H169 and E171 each act as charge relay system in the active site.

It belongs to the glutaminase PdxT/SNO family. In the presence of PdxS, forms a dodecamer of heterodimers. Only shows activity in the heterodimer.

It catalyses the reaction aldehydo-D-ribose 5-phosphate + D-glyceraldehyde 3-phosphate + L-glutamine = pyridoxal 5'-phosphate + L-glutamate + phosphate + 3 H2O + H(+). It carries out the reaction L-glutamine + H2O = L-glutamate + NH4(+). The protein operates within cofactor biosynthesis; pyridoxal 5'-phosphate biosynthesis. Catalyzes the hydrolysis of glutamine to glutamate and ammonia as part of the biosynthesis of pyridoxal 5'-phosphate. The resulting ammonia molecule is channeled to the active site of PdxS. The chain is Pyridoxal 5'-phosphate synthase subunit PdxT from Shouchella clausii (strain KSM-K16) (Alkalihalobacillus clausii).